Consider the following 673-residue polypeptide: Metal-nicotianamine transporter YSL1 (673 aa).

The span at 1–13 shows a compositional bias: basic and acidic residues; the sequence is MEIEQRRIMKREG. The tract at residues 1–39 is disordered; sequence MEIEQRRIMKREGEEEEDNNQLSLQEEEPDTEEEMSGRT. The span at 14-34 shows a compositional bias: acidic residues; it reads EEEEDNNQLSLQEEEPDTEEE. Helical transmembrane passes span 46 to 66, 71 to 91, 119 to 139, 163 to 183, 225 to 245, 260 to 280, 283 to 303, 328 to 348, 392 to 412, 420 to 440, 442 to 462, 467 to 487, 510 to 530, 558 to 578, 604 to 624, and 642 to 662; these read QITVRGVFVSIVIGVVFSVIA, LTTGIVPNLNSSAALLAFVFV, SAVACYGIAVGGGFASYLLGL, GLGWMTAYLFVVCFIGLFVLI, FMKYFSFSFLWGFFQWFFSGI, AWKQTFFFDFSMTFVGAGMIC, LVNLSLLLGAILSYGLMWPLL, VFLSVALILGDGLYTFVKILF, FAVSGYLTFAAVSTVVVPLIF, VIVAYIFAPSLAFCNAYGAGL, DINMAYNYGKIGLFVIAAVTG, VVAGLAGCGLIKSVVSVSCIL, IGTVVGCIVTPLSFFLFYKAF, FSALPLHCLQMCYGFFGFAVL, FLVGAYFAIDMCVGTLIVFVW, and GLICGEGLWTLPAAVLALAGV.

It belongs to the YSL (TC 2.A.67.2) family. In terms of tissue distribution, low levels of expression in leaves and shoots, but not detected in roots. Restricted to the vasculature, in the xylem parenchyma surrounding xylem tubes. Expressed in pollen grains, in the vasculature of petals and sepals, in the carpel veins, in the style underneath the stigmatic papillae, in the vascular tissue of the funiculus and in the chalazal endosperm.

It is found in the membrane. In terms of biological role, involved in iron loading of the seeds. Acts probably as a transporter of iron- and metal-nicotianamine chelates. The protein is Metal-nicotianamine transporter YSL1 (YSL1) of Arabidopsis thaliana (Mouse-ear cress).